The following is an 890-amino-acid chain: Probable LRR receptor-like serine/threonine-protein kinase At1g51860 (890 aa).

The first 23 residues, 1–23, serve as a signal peptide directing secretion; it reads MKSLHWFLHLLIIAFTVLRSVEA. Residues 24-513 are Extracellular-facing; the sequence is QNQAGFISLD…KESKKVPMVA (490 aa). Asn49, Asn96, Asn142, Asn181, Asn256, Asn285, Asn289, Asn295, Asn312, Asn332, Asn340, Asn402, and Asn419 each carry an N-linked (GlcNAc...) asparagine glycan. LRR repeat units follow at residues 412-435, 436-458, and 460-481; these read RIIS…SKLT, LLTV…FAEM, and SLKL…PDSL. Asn465, Asn473, and Asn497 each carry an N-linked (GlcNAc...) asparagine glycan. The helical transmembrane segment at 514-534 threads the bilayer; sequence IAASVAGVFALLVILAIFFVI. The Cytoplasmic portion of the chain corresponds to 535 to 890; that stretch reads KRKNVKAHKS…STSDFAPGAR (356 aa). Thr575 bears the Phosphothreonine mark. One can recognise a Protein kinase domain in the interval 584–856; sequence NNFERVLGKG…HVVMELNDCV (273 aa). ATP contacts are provided by residues 590–598 and Lys611; that span reads LGKGGFGTV. A Phosphotyrosine modification is found at Tyr656. The Proton acceptor role is filled by Asp708. At Ser742 the chain carries Phosphoserine. A phosphothreonine mark is found at Thr743 and Thr748. Tyr756 carries the phosphotyrosine modification.

The protein belongs to the protein kinase superfamily. Ser/Thr protein kinase family.

Its subcellular location is the membrane. The catalysed reaction is L-seryl-[protein] + ATP = O-phospho-L-seryl-[protein] + ADP + H(+). The enzyme catalyses L-threonyl-[protein] + ATP = O-phospho-L-threonyl-[protein] + ADP + H(+). This Arabidopsis thaliana (Mouse-ear cress) protein is Probable LRR receptor-like serine/threonine-protein kinase At1g51860.